The primary structure comprises 454 residues: GTPase Der (454 aa).

EngA-type G domains lie at A4 to K167 and L188 to Q363. GTP is bound by residues G10 to S17, D56 to L60, N121 to E124, G194 to S201, D241 to V245, and N306 to D309. A KH-like domain is found at K364 to K450.

It belongs to the TRAFAC class TrmE-Era-EngA-EngB-Septin-like GTPase superfamily. EngA (Der) GTPase family. In terms of assembly, associates with the 50S ribosomal subunit.

Its function is as follows. GTPase that plays an essential role in the late steps of ribosome biogenesis. The polypeptide is GTPase Der (Orientia tsutsugamushi (strain Boryong) (Rickettsia tsutsugamushi)).